The sequence spans 154 residues: MGLSDGEWQLVLNVWGKVEGDIGGHGQEVLIRLFKGHPETLEKFDKFKHLKAEDEMRASEDLKKHGTTVLTALGGILKKKGQHAAELAPLAQSHATKHKIPVKYLEFISEAIIQVLQSKHPADFGADTQGAMSKALELFRNDIAAKYKELGFQG.

The Globin domain occupies 2–148; that stretch reads GLSDGEWQLV…FRNDIAAKYK (147 aa). Ser4 bears the Phosphoserine mark. His65 is a binding site for nitrite. His65 contributes to the O2 binding site. Thr68 bears the Phosphothreonine mark. His94 provides a ligand contact to heme b.

In terms of assembly, monomer.

It is found in the cytoplasm. The protein localises to the sarcoplasm. The catalysed reaction is Fe(III)-heme b-[protein] + nitric oxide + H2O = Fe(II)-heme b-[protein] + nitrite + 2 H(+). The enzyme catalyses H2O2 + AH2 = A + 2 H2O. Its function is as follows. Monomeric heme protein which primary function is to store oxygen and facilitate its diffusion within muscle tissues. Reversibly binds oxygen through a pentacoordinated heme iron and enables its timely and efficient release as needed during periods of heightened demand. Depending on the oxidative conditions of tissues and cells, and in addition to its ability to bind oxygen, it also has a nitrite reductase activity whereby it regulates the production of bioactive nitric oxide. Under stress conditions, like hypoxia and anoxia, it also protects cells against reactive oxygen species thanks to its pseudoperoxidase activity. This Hystrix cristata (North African crested porcupine) protein is Myoglobin.